Here is a 141-residue protein sequence, read N- to C-terminus: MAKQVTGQAKFQVPGGQATPAPPVGTSLGKYGVNLGQFVQQFNDRTKEYNGTPIPVIVTVYNDRSFDFITKSPPAASMLMQSAGIAKGSGVPNKDKVATVTRAQCEEIAQKKMEDLNARDIDQATRMIEGTARSMGIIVDG.

The interval 1–23 (MAKQVTGQAKFQVPGGQATPAPP) is disordered.

The protein belongs to the universal ribosomal protein uL11 family. As to quaternary structure, part of the ribosomal stalk of the 50S ribosomal subunit. Interacts with L10 and the large rRNA to form the base of the stalk. L10 forms an elongated spine to which L12 dimers bind in a sequential fashion forming a multimeric L10(L12)X complex. Post-translationally, one or more lysine residues are methylated.

Functionally, forms part of the ribosomal stalk which helps the ribosome interact with GTP-bound translation factors. This Rhodopirellula baltica (strain DSM 10527 / NCIMB 13988 / SH1) protein is Large ribosomal subunit protein uL11.